The sequence spans 54 residues: Ovomucoid (54 aa).

Residues 4-54 (VDCSEYPKPACTMEHRPLCGSDNQTYDNKCNFCNAVVESNGTLTLSHFGKC) form the Kazal-like domain. Intrachain disulfides connect Cys-6/Cys-36, Cys-14/Cys-33, and Cys-22/Cys-54. Asn-43 carries N-linked (GlcNAc...) asparagine glycosylation.

It is found in the secreted. The polypeptide is Ovomucoid (Guttera pucherani (Eastern crested guineafowl)).